Reading from the N-terminus, the 113-residue chain is Iron-sulfur cluster insertion protein ErpA (113 aa).

3 residues coordinate iron-sulfur cluster: Cys41, Cys105, and Cys107.

Belongs to the HesB/IscA family. As to quaternary structure, homodimer. Iron-sulfur cluster is required as a cofactor.

In terms of biological role, required for insertion of 4Fe-4S clusters for at least IspG. The polypeptide is Iron-sulfur cluster insertion protein ErpA (Actinobacillus pleuropneumoniae serotype 3 (strain JL03)).